An 82-amino-acid polypeptide reads, in one-letter code: Protein C14 (82 aa).

The sequence is that of Protein C14 from Homo sapiens (Human).